The sequence spans 1153 residues: Probable RNA-dependent RNA polymerase 3 (1153 aa).

The protein belongs to the RdRP family. In terms of tissue distribution, expressed in shoot apical meristem (SAM) and panicles.

It carries out the reaction RNA(n) + a ribonucleoside 5'-triphosphate = RNA(n+1) + diphosphate. Probably involved in the RNA silencing pathway and required for the generation of small interfering RNAs (siRNAs). The chain is Probable RNA-dependent RNA polymerase 3 (RDR3) from Oryza sativa subsp. japonica (Rice).